Here is a 336-residue protein sequence, read N- to C-terminus: Acetaldehyde dehydrogenase 1 (336 aa).

32–35 is an NAD(+) binding site; the sequence is SGVV. Cys150 functions as the Acyl-thioester intermediate in the catalytic mechanism. Asn309 provides a ligand contact to NAD(+).

The protein belongs to the acetaldehyde dehydrogenase family.

It carries out the reaction acetaldehyde + NAD(+) + CoA = acetyl-CoA + NADH + H(+). The sequence is that of Acetaldehyde dehydrogenase 1 (mhpF) from Mycobacterium ulcerans (strain Agy99).